The sequence spans 431 residues: Trigger factor (431 aa).

One can recognise a PPIase FKBP-type domain in the interval 164 to 249 (GDIAVIDFKG…IKEIKRKELP (86 aa)).

It belongs to the FKBP-type PPIase family. Tig subfamily.

The protein resides in the cytoplasm. It catalyses the reaction [protein]-peptidylproline (omega=180) = [protein]-peptidylproline (omega=0). In terms of biological role, involved in protein export. Acts as a chaperone by maintaining the newly synthesized protein in an open conformation. Functions as a peptidyl-prolyl cis-trans isomerase. The sequence is that of Trigger factor from Clostridium acetobutylicum (strain ATCC 824 / DSM 792 / JCM 1419 / IAM 19013 / LMG 5710 / NBRC 13948 / NRRL B-527 / VKM B-1787 / 2291 / W).